Reading from the N-terminus, the 84-residue chain is UPF0457 protein BALH_2270 (84 aa).

The protein belongs to the UPF0457 family.

This Bacillus thuringiensis (strain Al Hakam) protein is UPF0457 protein BALH_2270.